The following is a 264-amino-acid chain: Thymidylate synthase (264 aa).

A dUMP-binding site is contributed by Arg-21. His-51 is a (6R)-5,10-methylene-5,6,7,8-tetrahydrofolate binding site. Arg-126–Arg-127 contributes to the dUMP binding site. Residue Cys-146 is the Nucleophile of the active site. DUMP is bound by residues Arg-166–Asp-169, Asn-177, and His-207–Tyr-209. Asp-169 lines the (6R)-5,10-methylene-5,6,7,8-tetrahydrofolate pocket. Residue Ala-263 participates in (6R)-5,10-methylene-5,6,7,8-tetrahydrofolate binding.

This sequence belongs to the thymidylate synthase family. Bacterial-type ThyA subfamily. Homodimer.

It is found in the cytoplasm. The catalysed reaction is dUMP + (6R)-5,10-methylene-5,6,7,8-tetrahydrofolate = 7,8-dihydrofolate + dTMP. It functions in the pathway pyrimidine metabolism; dTTP biosynthesis. Its function is as follows. Catalyzes the reductive methylation of 2'-deoxyuridine-5'-monophosphate (dUMP) to 2'-deoxythymidine-5'-monophosphate (dTMP) while utilizing 5,10-methylenetetrahydrofolate (mTHF) as the methyl donor and reductant in the reaction, yielding dihydrofolate (DHF) as a by-product. This enzymatic reaction provides an intracellular de novo source of dTMP, an essential precursor for DNA biosynthesis. This is Thymidylate synthase from Parabacteroides distasonis (strain ATCC 8503 / DSM 20701 / CIP 104284 / JCM 5825 / NCTC 11152).